The following is a 369-amino-acid chain: F-box protein UCC1 (369 aa).

The 38-residue stretch at 8-45 (LMDLPLEIHLSLLEYVPNELRAVNKYFYVLHNHSYKEK) folds into the F-box domain.

In terms of assembly, component of the SCF(UCC1) E3 ubiquitin-protein ligase complex composed of CDC53, SKP1, RBX1 and UCC1. Interacts with CIT2. In terms of processing, monoubiquitinated by UBC4.

Its pathway is protein modification; protein ubiquitination. Functionally, substrate recognition component of the SKP1-CUL1-F-box protein E3 ubiquitin-protein ligase complex SCF(UCC1) which mediates the ubiquitination and subsequent proteasomal degradation of target proteins. The SCF(UCC1) complex acts as a metabolic switch for the glyoxylate cycle and regulates the level of CIT2 protein to maintain citrate homeostasis. The protein is F-box protein UCC1 (UCC1) of Saccharomyces cerevisiae (strain ATCC 204508 / S288c) (Baker's yeast).